Consider the following 521-residue polypeptide: Medium/long-chain-fatty-acid--[acyl-carrier-protein] ligase MbtM (521 aa).

The protein belongs to the ATP-dependent AMP-binding enzyme family.

It catalyses the reaction a long-chain fatty acid + holo-[ACP] + ATP = a long-chain fatty acyl-[ACP] + AMP + diphosphate. The catalysed reaction is a medium-chain fatty acid + holo-[ACP] + ATP = a medium-chain fatty acyl-[ACP] + AMP + diphosphate. It participates in siderophore biosynthesis; mycobactin biosynthesis. Functionally, activates lipidic moieties required for mycobactin biosynthesis. Converts medium- to long-chain aliphatic fatty acids into acyl adenylate, which is further transferred on to the phosphopantetheine arm of the carrier protein MbtL. This is Medium/long-chain-fatty-acid--[acyl-carrier-protein] ligase MbtM (mbtM) from Mycobacterium bovis (strain ATCC BAA-935 / AF2122/97).